A 157-amino-acid chain; its full sequence is Nascent polypeptide-associated complex subunit beta (157 aa).

The tract at residues Met1–Lys31 is disordered. An NAC-A/B domain is found at Glu33–Ile98. The segment at Asn125–Glu157 is disordered. The segment covering Gly130–Glu139 has biased composition (low complexity).

The protein belongs to the NAC-beta family. In terms of assembly, part of the nascent polypeptide-associated complex (NAC), consisting of EGD2 and EGD1. NAC associates with ribosomes via EGD1.

The protein resides in the cytoplasm. It localises to the nucleus. Its function is as follows. Component of the nascent polypeptide-associated complex (NAC), a dynamic component of the ribosomal exit tunnel, protecting the emerging polypeptides from interaction with other cytoplasmic proteins to ensure appropriate nascent protein targeting. The NAC complex also promotes mitochondrial protein import by enhancing productive ribosome interactions with the outer mitochondrial membrane and blocks the inappropriate interaction of ribosomes translating non-secretory nascent polypeptides with translocation sites in the membrane of the endoplasmic reticulum. EGD1 may act as a transcription factor that exert a negative effect on the expression of several genes that are transcribed by RNA polymerase II. The protein is Nascent polypeptide-associated complex subunit beta (EGD1) of Lodderomyces elongisporus (strain ATCC 11503 / CBS 2605 / JCM 1781 / NBRC 1676 / NRRL YB-4239) (Yeast).